A 3590-amino-acid chain; its full sequence is Filamentous hemagglutinin (3590 aa).

2 disordered regions span residues glycine 3256 to serine 3309 and alanine 3417 to valine 3498. Positions proline 3289 to proline 3299 are enriched in pro residues. The segment covering glutamine 3300–serine 3309 has biased composition (low complexity). Over residues alanine 3417–lysine 3432 the composition is skewed to pro residues.

The protein localises to the cell surface. Functionally, evidence for a role in host-cell binding and infection. This is Filamentous hemagglutinin (fhaB) from Bordetella pertussis (strain Tohama I / ATCC BAA-589 / NCTC 13251).